The chain runs to 225 residues: PKHD-type hydroxylase YbiX (225 aa).

The Fe2OG dioxygenase domain maps to 78–177; that stretch reads TLSTPLFNRY…RVASFMWIQS (100 aa). The Fe cation site is built by H96, D98, and H158. Residue R168 participates in 2-oxoglutarate binding.

Fe(2+) serves as cofactor. The cofactor is L-ascorbate.

This chain is PKHD-type hydroxylase YbiX, found in Escherichia coli (strain 55989 / EAEC).